Consider the following 261-residue polypeptide: MNSFQALILGLVQGLTEYLPVSSSGHLVLLQKIFGLKENVLLFDILVHLGTLVPLLIIFRDEILAIIKKPWGRLPLLIIAGTVPTALIGLGFKDFFERLFVSGSTLGIEFIITGLILWLAERQKSGRKNLEKTTFLDAIFVGVAQGLAILPAISRSGLTISGALIRGLNREWAAKFSFLLSIPAILGAAVLDLKSFVEQNANLAGIDLMPFIVGFFAAMLSGYFAVKFMLEILRKGKLTWFSYYVWILGVTILVLQAAGKF.

Helical transmembrane passes span 39-59, 76-96, 99-119, 173-193, 206-226, and 238-258; these read NVLL…LIIF, LLII…KDFF, LFVS…ILWL, AAKF…VLDL, IDLM…YFAV, and LTWF…LQAA.

This sequence belongs to the UppP family.

Its subcellular location is the cell membrane. The enzyme catalyses di-trans,octa-cis-undecaprenyl diphosphate + H2O = di-trans,octa-cis-undecaprenyl phosphate + phosphate + H(+). Catalyzes the dephosphorylation of undecaprenyl diphosphate (UPP). Confers resistance to bacitracin. In Carboxydothermus hydrogenoformans (strain ATCC BAA-161 / DSM 6008 / Z-2901), this protein is Undecaprenyl-diphosphatase.